The sequence spans 323 residues: Solute carrier family 35 member B1 (323 aa).

Transmembrane regions (helical) follow at residues 15–35 (LVCFLGVFVCYFYYGILQETI), 51–71 (FALSLVFVQCIVNALFAKLLI), 85–105 (WLYAACSLSYLGAMVSSNSAL), 136–156 (YPLSKYLCVLLIVLGVALFMY), 169–189 (TFGYGELLLLLSLTLDGLTGV), 205–225 (MMLYINLWSSLFLGAGIVFTG), 253–273 (LGQTFIFMTVVYFGPLTCSII), and 286–306 (VILFSNPISSIQWVGTILVFL). Residues 319–323 (KKPSH) carry the Di-lysine motif motif.

Belongs to the nucleotide-sugar transporter family. SLC35B subfamily.

The protein localises to the endoplasmic reticulum membrane. Functionally, probable sugar transporter. The chain is Solute carrier family 35 member B1 (slc35b1) from Xenopus tropicalis (Western clawed frog).